The primary structure comprises 425 residues: UDP-N-acetylglucosamine 1-carboxyvinyltransferase (425 aa).

23-24 is a phosphoenolpyruvate binding site; that stretch reads KN. Arg-100 contacts UDP-N-acetyl-alpha-D-glucosamine. Cys-124 serves as the catalytic Proton donor. Cys-124 is subject to 2-(S-cysteinyl)pyruvic acid O-phosphothioketal. 2 residues coordinate UDP-N-acetyl-alpha-D-glucosamine: Asp-313 and Ile-335.

This sequence belongs to the EPSP synthase family. MurA subfamily.

The protein localises to the cytoplasm. The catalysed reaction is phosphoenolpyruvate + UDP-N-acetyl-alpha-D-glucosamine = UDP-N-acetyl-3-O-(1-carboxyvinyl)-alpha-D-glucosamine + phosphate. It functions in the pathway cell wall biogenesis; peptidoglycan biosynthesis. Cell wall formation. Adds enolpyruvyl to UDP-N-acetylglucosamine. This chain is UDP-N-acetylglucosamine 1-carboxyvinyltransferase, found in Wolbachia pipientis wMel.